Here is a 110-residue protein sequence, read N- to C-terminus: Protein RALF-like 4 (110 aa).

The first 23 residues, 1 to 23 (MGVKMLLIFGLLILAMVAKSVNA), serve as a signal peptide directing secretion. Positions 24 to 58 (TYPLTKSCINGQGCIGEDDELESLMDSETNRRQLA) are cleaved as a propeptide — removed in mature form. 2 cysteine pairs are disulfide-bonded: Cys76–Cys86 and Cys99–Cys105.

It belongs to the plant rapid alkalinization factor (RALF) family. In terms of processing, proteolytically cleaved, probably by S1P, a subtilisin-like serine protease (subtilase).

The protein localises to the secreted. Cell signaling peptide that may regulate plant stress, growth, and development. Mediates a rapid alkalinization of extracellular space by mediating a transient increase in the cytoplasmic Ca(2+) concentration leading to a calcium-dependent signaling events through a cell surface receptor and a concomitant activation of some intracellular mitogen-activated protein kinases. This is Protein RALF-like 4 (RALFL4) from Arabidopsis thaliana (Mouse-ear cress).